The primary structure comprises 438 residues: GTPase Der (438 aa).

2 EngA-type G domains span residues 4 to 168 (PLVT…KSEG) and 177 to 352 (IKIA…DNYS). Residues 10-17 (GRPNVGKS), 57-61 (DTGGI), 120-123 (NKID), 183-190 (GKPNVGKS), 230-234 (DTAGL), and 295-298 (NKWD) each bind GTP. Residues 353 to 437 (KRIATGVLND…GIKMIFKERK (85 aa)) enclose the KH-like domain.

It belongs to the TRAFAC class TrmE-Era-EngA-EngB-Septin-like GTPase superfamily. EngA (Der) GTPase family. As to quaternary structure, associates with the 50S ribosomal subunit.

GTPase that plays an essential role in the late steps of ribosome biogenesis. This is GTPase Der from Clostridium acetobutylicum (strain ATCC 824 / DSM 792 / JCM 1419 / IAM 19013 / LMG 5710 / NBRC 13948 / NRRL B-527 / VKM B-1787 / 2291 / W).